The following is a 293-amino-acid chain: Ribosomal protein L11 methyltransferase (293 aa).

The S-adenosyl-L-methionine site is built by Thr145, Gly166, Asp188, and Asn230.

The protein belongs to the methyltransferase superfamily. PrmA family.

The protein resides in the cytoplasm. It carries out the reaction L-lysyl-[protein] + 3 S-adenosyl-L-methionine = N(6),N(6),N(6)-trimethyl-L-lysyl-[protein] + 3 S-adenosyl-L-homocysteine + 3 H(+). Functionally, methylates ribosomal protein L11. This chain is Ribosomal protein L11 methyltransferase, found in Actinobacillus pleuropneumoniae serotype 3 (strain JL03).